Here is a 392-residue protein sequence, read N- to C-terminus: Methylthioribose-1-phosphate isomerase (392 aa).

Catalysis depends on aspartate 267, which acts as the Proton donor.

It belongs to the eIF-2B alpha/beta/delta subunits family. MtnA subfamily.

It is found in the cytoplasm. Its subcellular location is the nucleus. The catalysed reaction is 5-(methylsulfanyl)-alpha-D-ribose 1-phosphate = 5-(methylsulfanyl)-D-ribulose 1-phosphate. Its pathway is amino-acid biosynthesis; L-methionine biosynthesis via salvage pathway; L-methionine from S-methyl-5-thio-alpha-D-ribose 1-phosphate: step 1/6. Its function is as follows. Catalyzes the interconversion of methylthioribose-1-phosphate (MTR-1-P) into methylthioribulose-1-phosphate (MTRu-1-P). This is Methylthioribose-1-phosphate isomerase from Blastomyces gilchristii (strain SLH14081) (Blastomyces dermatitidis).